The sequence spans 248 residues: Amphiregulin (248 aa).

The signal sequence occupies residues 1 to 26; sequence MRTPLLPLARSVLLLLVLGSGHYAAA. Positions 27–99 are excised as a propeptide; it reads LELNDPSSGK…IIDDSVRVEQ (73 aa). Disordered stretches follow at residues 29–48, 57–77, and 100–136; these read LNDP…SAGG, VSTI…YDYS, and VIKP…KKKK. Polar residues predominate over residues 58-70; the sequence is STISEMPSGSELS. The span at 100–116 shows a compositional bias: basic and acidic residues; the sequence is VIKPKKNKTEGEKSTEK. The N-linked (GlcNAc...) asparagine glycan is linked to N106. Over residues 117-136 the composition is skewed to basic residues; sequence PKRKKKGGKNGKGRRNKKKK. One can recognise an EGF-like domain in the interval 135-175; that stretch reads KKNPCTAKFQNFCIHGECRYIENLEVVTCNCHQDYFGERCG. 3 disulfide bridges follow: C139–C152, C147–C163, and C165–C174. A helical membrane pass occupies residues 192 to 215; the sequence is IAVVAVTIFVSAIILAAIGIGIVI. N-linked (GlcNAc...) asparagine glycosylation is present at N241.

It belongs to the amphiregulin family. The immature precursor interacts with CNIH.

It localises to the membrane. Functionally, ligand of the EGF receptor/EGFR. Autocrine growth factor as well as a mitogen for a broad range of target cells including astrocytes, Schwann cells and fibroblasts. This is Amphiregulin (Areg) from Mus musculus (Mouse).